The primary structure comprises 427 residues: Light-independent protochlorophyllide reductase subunit N (427 aa).

[4Fe-4S] cluster contacts are provided by Cys-28, Cys-53, and Cys-114.

Belongs to the BchN/ChlN family. As to quaternary structure, protochlorophyllide reductase is composed of three subunits; BchL, BchN and BchB. Forms a heterotetramer of two BchB and two BchN subunits. The cofactor is [4Fe-4S] cluster.

The catalysed reaction is chlorophyllide a + oxidized 2[4Fe-4S]-[ferredoxin] + 2 ADP + 2 phosphate = protochlorophyllide a + reduced 2[4Fe-4S]-[ferredoxin] + 2 ATP + 2 H2O. The protein operates within porphyrin-containing compound metabolism; bacteriochlorophyll biosynthesis (light-independent). Its function is as follows. Component of the dark-operative protochlorophyllide reductase (DPOR) that uses Mg-ATP and reduced ferredoxin to reduce ring D of protochlorophyllide (Pchlide) to form chlorophyllide a (Chlide). This reaction is light-independent. The NB-protein (BchN-BchB) is the catalytic component of the complex. The chain is Light-independent protochlorophyllide reductase subunit N from Dinoroseobacter shibae (strain DSM 16493 / NCIMB 14021 / DFL 12).